The chain runs to 298 residues: UDP-N-acetylenolpyruvoylglucosamine reductase (298 aa).

Residues K26–G191 enclose the FAD-binding PCMH-type domain. The active site involves R170. Catalysis depends on S220, which acts as the Proton donor. E290 is a catalytic residue.

It belongs to the MurB family. The cofactor is FAD.

Its subcellular location is the cytoplasm. It catalyses the reaction UDP-N-acetyl-alpha-D-muramate + NADP(+) = UDP-N-acetyl-3-O-(1-carboxyvinyl)-alpha-D-glucosamine + NADPH + H(+). The protein operates within cell wall biogenesis; peptidoglycan biosynthesis. Cell wall formation. The sequence is that of UDP-N-acetylenolpyruvoylglucosamine reductase from Lactobacillus acidophilus (strain ATCC 700396 / NCK56 / N2 / NCFM).